The chain runs to 379 residues: MEGNRDEAEKCVQIAREALSAGNRDKAQRFLQKAEKLYPLPAARALLEIIMKNGSTAGSSTHCRKPPGSSDQSKPSCGKDGTSGAGEGGKVYTKDQVEGVLSINKCKNYYEVLGVTKDAGDEDLKKAYRKLALKFHPDKNHAPGATDAFKKIGNAYAVLSNPEKRKQYDLTGSEEQACNHQNNGRFNFHRGCEADITPEDLFNIFFGGGFPSGSVHSFSNGRAAYSHQHQHRHSGHEREEERADGGFSVFIQLMPIIVLILVSLLSQLMVSNPPYSLYPRSGSGQTIKMQTENLGVVYYVSKDFKSEYKGTLLQKVEKSVEEDYVTNIRNNCWKERQQKTDMQYAAKVYRDEQLRRKADALSMENCKELERLTSLYKGG.

The Cytoplasmic segment spans residues 1 to 244 (MEGNRDEAEK…GHEREEERAD (244 aa)). The disordered stretch occupies residues 56–90 (TAGSSTHCRKPPGSSDQSKPSCGKDGTSGAGEGGK). The J domain maps to 108 to 172 (NYYEVLGVTK…EKRKQYDLTG (65 aa)). A helical membrane pass occupies residues 245–265 (GGFSVFIQLMPIIVLILVSLL). Topologically, residues 266-379 (SQLMVSNPPY…ERLTSLYKGG (114 aa)) are lumenal.

This sequence belongs to the DnaJ family. DNAJB12/DNAJB14 subfamily. In terms of assembly, interacts (via J domain) with HSPA8/Hsc70. Forms a multiprotein complex, at least composed of DNAJB12, DNAJB14, HSPA8/Hsc70 and SGTA; interaction with DNAJB14 and HSPA8/Hsc70 is direct.

The protein localises to the endoplasmic reticulum membrane. Its subcellular location is the nucleus membrane. In terms of biological role, acts as a co-chaperone with HSPA8/Hsc70; required to promote protein folding and trafficking, prevent aggregation of client proteins, and promote unfolded proteins to endoplasmic reticulum-associated degradation (ERAD) pathway. Acts by determining HSPA8/Hsc70's ATPase and polypeptide-binding activities. Can also act independently of HSPA8/Hsc70: together with DNAJB12, acts as a chaperone that promotes maturation of potassium channels KCND2 and KCNH2 by stabilizing nascent channel subunits and assembling them into tetramers. While stabilization of nascent channel proteins is dependent on HSPA8/Hsc70, the process of oligomerization of channel subunits is independent of HSPA8/Hsc70. When overexpressed, forms membranous structures together with DNAJB12 and HSPA8/Hsc70 within the nucleus; the role of these structures, named DJANGOs, is still unclear. In Mus musculus (Mouse), this protein is DnaJ homolog subfamily B member 14.